Reading from the N-terminus, the 567-residue chain is DNA ligase (567 aa).

Glutamate 260 is a binding site for ATP. Residue lysine 262 is the N6-AMP-lysine intermediate of the active site. The ATP site is built by arginine 267, arginine 282, glutamate 312, phenylalanine 352, arginine 427, and lysine 433.

This sequence belongs to the ATP-dependent DNA ligase family. Requires Mg(2+) as cofactor.

It catalyses the reaction ATP + (deoxyribonucleotide)n-3'-hydroxyl + 5'-phospho-(deoxyribonucleotide)m = (deoxyribonucleotide)n+m + AMP + diphosphate.. Its function is as follows. DNA ligase that seals nicks in double-stranded DNA during DNA replication, DNA recombination and DNA repair. The polypeptide is DNA ligase (Methanococcoides burtonii (strain DSM 6242 / NBRC 107633 / OCM 468 / ACE-M)).